We begin with the raw amino-acid sequence, 689 residues long: DNA ligase (689 aa).

NAD(+) contacts are provided by residues 40–44, 89–90, and E121; these read DAEYD and SL. Catalysis depends on K123, which acts as the N6-AMP-lysine intermediate. 4 residues coordinate NAD(+): R144, E179, K295, and K319. 4 residues coordinate Zn(2+): C413, C416, C431, and C437. A BRCT domain is found at 610–689; it reads REQSSLTGKI…AEWLTLVRDI (80 aa).

The protein belongs to the NAD-dependent DNA ligase family. LigA subfamily. The cofactor is Mg(2+). Requires Mn(2+) as cofactor.

It carries out the reaction NAD(+) + (deoxyribonucleotide)n-3'-hydroxyl + 5'-phospho-(deoxyribonucleotide)m = (deoxyribonucleotide)n+m + AMP + beta-nicotinamide D-nucleotide.. Its function is as follows. DNA ligase that catalyzes the formation of phosphodiester linkages between 5'-phosphoryl and 3'-hydroxyl groups in double-stranded DNA using NAD as a coenzyme and as the energy source for the reaction. It is essential for DNA replication and repair of damaged DNA. The sequence is that of DNA ligase from Rickettsia bellii (strain OSU 85-389).